Here is a 443-residue protein sequence, read N- to C-terminus: Xaa-Pro dipeptidase (443 aa).

Mn(2+) is bound by residues Asp246, Asp257, His339, Glu384, and Glu423.

This sequence belongs to the peptidase M24B family. Bacterial-type prolidase subfamily. Mn(2+) serves as cofactor.

It catalyses the reaction Xaa-L-Pro dipeptide + H2O = an L-alpha-amino acid + L-proline. Its function is as follows. Splits dipeptides with a prolyl residue in the C-terminal position. The polypeptide is Xaa-Pro dipeptidase (Citrobacter koseri (strain ATCC BAA-895 / CDC 4225-83 / SGSC4696)).